A 178-amino-acid chain; its full sequence is Caveolin-1 (178 aa).

Ser2 is subject to N-acetylserine. Position 2 is a phosphoserine (Ser2). The tract at residues 2–94 (SGGKYVDSEG…WKASFTTFTV (93 aa)) is required for homooligomerization. Over 2 to 104 (SGGKYVDSEG…TKYWFYRLLS (103 aa)) the chain is Cytoplasmic. Lys5 bears the N6-acetyllysine; alternate mark. Lys5 participates in a covalent cross-link: Glycyl lysine isopeptide (Lys-Gly) (interchain with G-Cter in ubiquitin); alternate. Position 6 is a phosphotyrosine (Tyr6). Position 9 is a phosphoserine (Ser9). Phosphotyrosine; by ABL1 is present on Tyr14. Tyr25 is modified (phosphotyrosine). Glycyl lysine isopeptide (Lys-Gly) (interchain with G-Cter in ubiquitin) cross-links involve residues Lys26 and Lys30. The residue at position 37 (Ser37) is a Phosphoserine. Glycyl lysine isopeptide (Lys-Gly) (interchain with G-Cter in ubiquitin) cross-links involve residues Lys39, Lys47, and Lys57. Residues 82–94 (DGIWKASFTTFTV) form an interaction with CAVIN3 region. The helical intramembrane region spans 105–125 (ALFGIPMALIWGIYFAILSFL). Residues 126 to 178 (HIWAVVPCIKSFLIEIQCISRVYSIYVHTVCDPLFEAVGKIFSNVRINLQKEI) are Cytoplasmic-facing. The tract at residues 131 to 142 (VPCIKSFLIEIQ) is interacts with SPRY1, SPRY2, SPRY3 and SPRY4. S-palmitoyl cysteine attachment occurs at residues Cys133, Cys143, and Cys156. The segment at 149-160 (SIYVHTVCDPLF) is interacts with SPRY1, SPRY2, and SPRY4. The segment at 167–178 (FSNVRINLQKEI) is interacts with SPRY1, SPRY2, SPRY3 and SPRY4.

It belongs to the caveolin family. As to quaternary structure, homooligomer. Interacts (via the N-terminus) with DPP4; the interaction is direct. Forms a stable heterooligomeric complex with CAV2 that targets to lipid rafts and drives caveolae formation. Interacts with PACSIN2; this interaction induces membrane tubulation. Interacts with BMX, BTK, CTNNB1, CDH1, GLIPR2, JUP, NOSTRIN, SNAP25 and STX1A. Interacts with SLC7A9. Interacts with TGFBR1. Interacts with CAVIN3 (via leucine-zipper domain) in a cholesterol-sensitive manner. Interacts with CAVIN1. Interacts with EHD2 in a cholesterol-dependent manner. Forms a ternary complex with UBXN6 and VCP; mediates CAV1 targeting to lysosomes for degradation. Interacts with ABCG1; this interaction regulates ABCG1-mediated cholesterol efflux. Interacts with NEU3; this interaction enhances NEU3 sialidase activity within caveola. Interacts (via C-terminus) with SPRY1, SPRY2 (via C-terminus), SPRY3, and SPRY4. Interacts with IGFBP5; this interaction allows trafficking of IGFBP5 from the plasma membrane to the nucleus. In terms of processing, phosphorylated at Tyr-14 by ABL1 in response to oxidative stress. Ubiquitinated. Undergo monoubiquitination and multi- and/or polyubiquitination. Monoubiquitination of N-terminal lysines promotes integration in a ternary complex with UBXN6 and VCP which promotes oligomeric CAV1 targeting to lysosomes for degradation. Ubiquitinated by ZNRF1; leading to degradation and modulation of the TLR4-mediated immune response.

The protein resides in the golgi apparatus membrane. It is found in the cell membrane. It localises to the membrane. Its subcellular location is the caveola. The protein localises to the membrane raft. Functionally, may act as a scaffolding protein within caveolar membranes. Forms a stable heterooligomeric complex with CAV2 that targets to lipid rafts and drives caveolae formation. Mediates the recruitment of CAVIN proteins (CAVIN1/2/3/4) to the caveolae. Interacts directly with G-protein alpha subunits and can functionally regulate their activity. Involved in the costimulatory signal essential for T-cell receptor (TCR)-mediated T-cell activation. Its binding to DPP4 induces T-cell proliferation and NF-kappa-B activation in a T-cell receptor/CD3-dependent manner. Recruits CTNNB1 to caveolar membranes and may regulate CTNNB1-mediated signaling through the Wnt pathway. Negatively regulates TGFB1-mediated activation of SMAD2/3 by mediating the internalization of TGFBR1 from membrane rafts leading to its subsequent degradation. Binds 20(S)-hydroxycholesterol (20(S)-OHC). This is Caveolin-1 (CAV1) from Chlorocebus aethiops (Green monkey).